Consider the following 899-residue polypeptide: UPF0182 protein Mhun_1303 (899 aa).

7 helical membrane passes run Leu-6–Ser-26, Val-39–Phe-59, Val-93–Leu-113, Leu-136–Ile-156, Phe-196–Trp-216, Ile-240–Leu-260, and Ile-271–Leu-291.

Belongs to the UPF0182 family.

Its subcellular location is the cell membrane. In Methanospirillum hungatei JF-1 (strain ATCC 27890 / DSM 864 / NBRC 100397 / JF-1), this protein is UPF0182 protein Mhun_1303.